We begin with the raw amino-acid sequence, 352 residues long: C-C chemokine receptor type 5 (352 aa).

Residues methionine 1–alanine 30 lie on the Extracellular side of the membrane. Sulfotyrosine is present on tyrosine 3. 2 O-linked (GalNAc...) serine glycosylation sites follow: serine 6 and serine 7. A sulfotyrosine mark is found at tyrosine 10 and tyrosine 14. 2 disulfide bridges follow: cysteine 20/cysteine 269 and cysteine 101/cysteine 178. The helical transmembrane segment at histidine 31–cysteine 58 threads the bilayer. Topologically, residues lysine 59 to tyrosine 68 are cytoplasmic. A helical membrane pass occupies residues leucine 69–tyrosine 89. At alanine 90–glutamine 102 the chain is on the extracellular side. A helical membrane pass occupies residues phenylalanine 103–isoleucine 124. Residues aspartate 125–threonine 141 lie on the Cytoplasmic side of the membrane. A helical membrane pass occupies residues valine 142–phenylalanine 166. Residues threonine 167–methionine 198 lie on the Extracellular side of the membrane. Residues valine 199 to leucine 218 form a helical membrane-spanning segment. The Cytoplasmic segment spans residues lysine 219–arginine 235. Residues leucine 236–tyrosine 260 form a helical membrane-spanning segment. Residues glutamine 261 to glutamine 277 lie on the Extracellular side of the membrane. Residues alanine 278–glycine 301 form a helical membrane-spanning segment. Topologically, residues glutamate 302–leucine 352 are cytoplasmic. Residues cysteine 321, cysteine 323, and cysteine 324 are each lipidated (S-palmitoyl cysteine). Serine 337, serine 342, and serine 349 each carry phosphoserine; by BARK1.

It belongs to the G-protein coupled receptor 1 family. Interacts with PRAF2. Efficient ligand binding to CCL3/MIP-1alpha and CCL4/MIP-1beta requires sulfation, O-glycosylation and sialic acid modifications. Glycosylation on Ser-6 is required for efficient binding of CCL4. Interacts with GRK2. Interacts with ARRB1 and ARRB2. Interacts with CNIH4. Interacts with S100A4; this interaction stimulates T-lymphocyte chemotaxis. In terms of processing, sulfated on at least 2 of the N-terminal tyrosines. Sulfation is required for efficient binding of the chemokines, CCL3 and CCL4. Palmitoylation in the C-terminal is important for cell surface expression. Post-translationally, phosphorylation on serine residues in the C-terminal is stimulated by binding CC chemokines especially by APO-RANTES. In terms of processing, O-glycosylated, but not N-glycosylated. Ser-6 appears to be the major site even if Ser-7 may be also O-glycosylated. Also sialylated glycans present which contribute to chemokine binding. Ser-17 may also be glycosylated and, if so, with small moieties such as a T-antigen.

It localises to the cell membrane. Its function is as follows. Receptor for a number of inflammatory CC-chemokines including CCL3/MIP-1-alpha, CCL4/MIP-1-beta and RANTES and subsequently transduces a signal by increasing the intracellular calcium ion level. May play a role in the control of granulocytic lineage proliferation or differentiation. Participates in T-lymphocyte migration to the infection site by acting as a chemotactic receptor. This is C-C chemokine receptor type 5 (CCR5) from Ateles geoffroyi (Black-handed spider monkey).